The chain runs to 80 residues: MKDNVHPNYKDVVFHDVTSDFKILTRSTMTSKETVKWEDGQEYPLIKVEISSSSHPFYTGKHKVIDTGGRIDKFQKRYAR.

The protein belongs to the bacterial ribosomal protein bL31 family. Type B subfamily. As to quaternary structure, part of the 50S ribosomal subunit.

The protein is Large ribosomal subunit protein bL31B of Xanthomonas axonopodis pv. citri (strain 306).